Reading from the N-terminus, the 268-residue chain is tRNA (guanine-N(1)-)-methyltransferase (268 aa).

S-adenosyl-L-methionine contacts are provided by residues Gly110 and 129–134 (IGDFVM). A disordered region spans residues 246-268 (WGAPPAPVKRHRKRRPETTESAS).

It belongs to the RNA methyltransferase TrmD family. In terms of assembly, homodimer.

Its subcellular location is the cytoplasm. It catalyses the reaction guanosine(37) in tRNA + S-adenosyl-L-methionine = N(1)-methylguanosine(37) in tRNA + S-adenosyl-L-homocysteine + H(+). Functionally, specifically methylates guanosine-37 in various tRNAs. The protein is tRNA (guanine-N(1)-)-methyltransferase of Deinococcus deserti (strain DSM 17065 / CIP 109153 / LMG 22923 / VCD115).